Reading from the N-terminus, the 2227-residue chain is Genome polyprotein (2227 aa).

2 short sequence motifs ((L)YPX(n)L motif) span residues 167 to 171 and 200 to 205; these read YPHGL and YPVWEL. The interval 766–836 is involved in P1-2A pentamerization; it reads MMSRIAAGDL…PRKMKGVFSQ (71 aa). A helical membrane pass occupies residues 1011-1031; the sequence is TVEIINTVLCFVKSGILLYVI. Residues 1043 to 1070 form a membrane-penetrating ability region; the sequence is IGLLRVMNYVDIGCSVISCGKVFSKMLE. Residues 1127-1155 adopt a coiled-coil conformation; the sequence is KKKDVLNILKDNRQKIEKAIEEADNLCIL. An SF3 helicase domain is found at 1204 to 1366; the sequence is HQKLKNLGSI…SFFKNPHNDM (163 aa). 1230–1237 provides a ligand contact to ATP; it reads GKRGGGKS. The helical transmembrane segment at 1462–1482 threads the bilayer; sequence WVAVGAAVGILGVLVAGWFVY. Position 1499 is an O-(5'-phospho-RNA)-tyrosine (Tyr1499). A Peptidase C3 domain is found at 1514 to 1728; that stretch reads DPVESQSPLE…VAKLVTQEMF (215 aa). Residues His1563, Asp1603, and Cys1691 each act as for protease 3C activity in the active site. The RdRp catalytic domain occupies 1976 to 2097; sequence DVGLDLDFSA…VFSRDVQIDN (122 aa).

This sequence belongs to the picornaviridae polyprotein family. As to quaternary structure, homodimer. Homomultimer; probably interacts with membranes in a multimeric form. Seems to assemble into amyloid-like fibers. Homodimer. Monomer. Interacts with protein 3CD. In terms of assembly, interacts with host ACBD3. As to quaternary structure, interacts with protein 3AB. Interacts with human MAVS. In terms of assembly, homodimer; disulfide-linked. As to quaternary structure, homopentamer. Homooligomer. Interacts with capsid protein VP2. Interacts with capsid protein VP3. In terms of assembly, interacts with capsid protein VP1. Interacts with capsid protein VP3. As to quaternary structure, interacts with capsid protein VP1. Interacts with capsid protein VP2. Post-translationally, specific enzymatic cleavages by viral protease in vivo yield a variety of precursors and mature proteins. Polyprotein processing intermediates are produced, such as P1-2A which is a functional precursor of the structural proteins, VP0 which is a VP4-VP2 precursor, VP1-2A precursor, 3ABC precursor which is a stable and catalytically active precursor of 3A, 3B and 3C proteins, 3AB and 3CD precursors. The assembly signal 2A is removed from VP1-2A by a host protease, possibly host Cathepsin L. This cleavage occurs over a region of 3 amino-acids probably generating VP1 proteins with heterogeneous C-termini. In terms of processing, during virion maturation, immature virions are rendered infectious following cleavage of VP0 into VP4 and VP2. This maturation seems to be an autocatalytic event triggered by the presence of RNA in the capsid and is followed by a conformational change of the particle. The assembly signal 2A is removed from VP1-2A by a host protease, possibly host Cathepsin L in naked virions. This cleavage does not occur in enveloped virions. This cleavage occurs over a region of 3 amino-acids probably generating VP1 proteins with heterogeneous C-termini. Post-translationally, VPg is uridylylated prior to priming replication into VPg-pUpU. In terms of processing, unlike other picornaviruses, does not seem to be myristoylated.

The protein resides in the virion. It localises to the host endosome. The protein localises to the host multivesicular body. Its subcellular location is the host membrane. It is found in the host mitochondrion outer membrane. The protein resides in the host cytoplasm. It localises to the host cytoplasmic vesicle membrane. The enzyme catalyses RNA(n) + a ribonucleoside 5'-triphosphate = RNA(n+1) + diphosphate. The catalysed reaction is a ribonucleoside 5'-triphosphate + H2O = a ribonucleoside 5'-diphosphate + phosphate + H(+). It carries out the reaction Selective cleavage of Gln-|-Gly bond in the poliovirus polyprotein. In other picornavirus reactions Glu may be substituted for Gln, and Ser or Thr for Gly.. Capsid proteins VP1, VP2, and VP3 form a closed capsid enclosing the viral positive strand RNA genome. All these proteins contain a beta-sheet structure called beta-barrel jelly roll. Together they form an icosahedral capsid (T=3) composed of 60 copies of each VP1, VP2, and VP3, with a diameter of approximately 300 Angstroms. VP1 is situated at the 12 fivefold axes, whereas VP2 and VP3 are located at the quasi-sixfold axes. The naked capsid interacts with the host receptor HAVCR1 to provide virion attachment to and probably entry into the target cell. Functionally, VP0 precursor is a component of the immature procapsids. In terms of biological role, plays a role in the assembly of the 12 pentamers into an icosahedral structure. Has not been detected in mature virions, supposedly owing to its small size. Its function is as follows. Precursor component of immature procapsids that corresponds to an extended form of the structural protein VP1. After maturation, possibly by the host Cathepsin L, the assembly signal 2A is cleaved to give rise to the mature VP1 protein. Functions as a viroporin. Affects membrane integrity and causes an increase in membrane permeability. Involved in host intracellular membrane rearrangements probably to give rise to the viral factories. Does not disrupt calcium homeostasis or glycoprotein trafficking. Antagonizes the innate immune response of the host by suppressing IFN-beta synthesis, which it achieves by interfering with the RIG-I/IFIH1 pathway. Functionally, affects membrane integrity and causes an increase in membrane permeability. In terms of biological role, associates with and induces structural rearrangements of intracellular membranes. Displays RNA-binding activity. Its function is as follows. The precursor 3ABC is targeted to the mitochondrial membrane where protease 3C activity cleaves and inhibits the host antiviral protein MAVS, thereby disrupting activation of IRF3 through the IFIH1/MDA5 pathway. In vivo, the protease activity of 3ABC precursor is more efficient in cleaving the 2BC precursor than that of protein 3C. The 3ABC precursor may therefore play a role in the proteolytic processing of the polyprotein. Possible viroporin. Interacts with the 3CD precursor and with RNA structures found at both the 5'- and 3'-termini of the viral genome. Since the 3AB precursor contains the hydrophobic domain 3A, it probably anchors the whole viral replicase complex to intracellular membranes on which viral RNA synthesis occurs. Functionally, may serve as membrane anchor to the 3AB and 3ABC precursors via its hydrophobic domain. May interact with RNA. In terms of biological role, acts as a primer for viral RNA replication and remains covalently bound to viral genomic RNA. VPg is uridylylated prior to priming replication into VPg-pUpU. The VPg-pUpU is then used as primer on the genomic RNA poly(A) by the RNA-dependent RNA polymerase to replicate the viral genome. Its function is as follows. Cysteine protease that generates mature viral proteins from the precursor polyprotein. In addition to its proteolytic activity, it binds to viral RNA, and thus influences viral genome replication. RNA and substrate bind cooperatively to the protease. Cleaves IKBKG/NEMO to impair innate immune signaling. Cleaves host PABPC1 which may participate in the switch of viral translation to RNA synthesis. Interacts with the 3AB precursor and with RNA structures found at both the 5'- and 3'-termini of the viral genome. Disrupts TLR3 signaling by degrading the host adapter protein TICAM1/TRIF. Functionally, RNA-directed RNA polymerase 3D-POL replicates genomic and antigenomic RNA by recognizing replications specific signals. This is Genome polyprotein from Homo sapiens (Human).